A 390-amino-acid polypeptide reads, in one-letter code: Centrosomal protein of 44 kDa (390 aa).

Residues 11–195 (RNLEQVLRLL…ISEDTLSPIT (185 aa)) form a binds with microtubules and centrioles region. Residues 233–267 (EITALQTMLAECQEKLKELTLIEKRLDCLEQKMKG) are a coiled coil. Residues 323–347 (KNKVGRPASIPLSSRYSTASSDSTP) form a disordered region. 2 positions are modified to phosphoserine: Ser331 and Ser345. The segment covering 335–345 (SSRYSTASSDS) has biased composition (low complexity). Thr346 carries the post-translational modification Phosphothreonine. Residues 361–385 (SEETTIQKMERMKKMFEETAELLKC) are a coiled coil.

Interacts with CROCC. Interacts with POC1B; the interaction is direct and recruits POC1B to centriolar microtubules. Binds to centriolar microtubules.

Its subcellular location is the cytoplasm. The protein localises to the cytoskeleton. It is found in the microtubule organizing center. It localises to the centrosome. The protein resides in the centriole. Its subcellular location is the spindle pole. The protein localises to the midbody. In terms of biological role, centriole-enriched microtubule-binding protein involved in centriole biogenesis. In collaboration with CEP295 and POC1B, is required for the centriole-to-centrosome conversion by ensuring the formation of bona fide centriole wall. Functions as a linker component that maintains centrosome cohesion. Associates with CROCC and regulates its stability and localization to the centrosome. In Macaca fascicularis (Crab-eating macaque), this protein is Centrosomal protein of 44 kDa (CEP44).